Reading from the N-terminus, the 876-residue chain is DNA polymerase I (876 aa).

The region spanning 1 to 310 (MKNKLVLIDG…FAIADSVTDE (310 aa)) is the 5'-3' exonuclease domain. The subtilisin large fragment stretch occupies residues 289–876 (TDEGEKPLAG…HYGPTWYDAK (588 aa)). Residues 469-876 (EQDRLLTELE…HYGPTWYDAK (408 aa)) form a polymerase region.

The protein belongs to the DNA polymerase type-A family. In terms of assembly, single-chain monomer with multiple functions.

The enzyme catalyses DNA(n) + a 2'-deoxyribonucleoside 5'-triphosphate = DNA(n+1) + diphosphate. In terms of biological role, in addition to polymerase activity, the recombinant enzyme has strand displacement and 5'-3' exonuclease activity, but lacks proofreading 3'-5' exonuclease activity. In Geobacillus stearothermophilus (Bacillus stearothermophilus), this protein is DNA polymerase I (polA).